The following is a 287-amino-acid chain: Polyamine aminopropyltransferase (287 aa).

Positions 5-238 (EIWYETLHAN…GIMTFAWASQ (234 aa)) constitute a PABS domain. Glutamine 33 is a binding site for S-methyl-5'-thioadenosine. Residues histidine 64 and aspartate 88 each contribute to the spermidine site. S-methyl-5'-thioadenosine is bound by residues glutamate 108 and 140–141 (DG). Aspartate 158 serves as the catalytic Proton acceptor. Residue 158 to 161 (DCTD) coordinates spermidine. Proline 165 is a binding site for S-methyl-5'-thioadenosine.

This sequence belongs to the spermidine/spermine synthase family. In terms of assembly, homodimer or homotetramer.

It is found in the cytoplasm. The catalysed reaction is S-adenosyl 3-(methylsulfanyl)propylamine + putrescine = S-methyl-5'-thioadenosine + spermidine + H(+). Its pathway is amine and polyamine biosynthesis; spermidine biosynthesis; spermidine from putrescine: step 1/1. Catalyzes the irreversible transfer of a propylamine group from the amino donor S-adenosylmethioninamine (decarboxy-AdoMet) to putrescine (1,4-diaminobutane) to yield spermidine. This chain is Polyamine aminopropyltransferase, found in Serratia proteamaculans (strain 568).